Consider the following 193-residue polypeptide: dTTP/UTP pyrophosphatase (193 aa).

The Proton acceptor role is filled by Asp-70.

The protein belongs to the Maf family. YhdE subfamily. Requires a divalent metal cation as cofactor.

It is found in the cytoplasm. The enzyme catalyses dTTP + H2O = dTMP + diphosphate + H(+). The catalysed reaction is UTP + H2O = UMP + diphosphate + H(+). Functionally, nucleoside triphosphate pyrophosphatase that hydrolyzes dTTP and UTP. May have a dual role in cell division arrest and in preventing the incorporation of modified nucleotides into cellular nucleic acids. The polypeptide is dTTP/UTP pyrophosphatase (Ruminiclostridium cellulolyticum (strain ATCC 35319 / DSM 5812 / JCM 6584 / H10) (Clostridium cellulolyticum)).